Reading from the N-terminus, the 184-residue chain is MNHPVAVALSDFSSLFLQAWRDTGHGFPRSEDLVGLESPCVEHDSGDEVTWKPITRQPQGDLAGVEKGIEIELHKDIIDFYSTQFSGDMAAKFGEIELDLLQVFSEQDGVRLQENILGHLVTQRRLKLKPTVFIGVIDSADKVIAICNLTGEVILETLGKNERDVLAKDVASFLQQLVPVVREA.

The protein belongs to the Syd family.

The protein resides in the cell inner membrane. Its function is as follows. Interacts with the SecY protein in vivo. May bind preferentially to an uncomplexed state of SecY, thus functioning either as a chelating agent for excess SecY in the cell or as a regulatory factor that negatively controls the translocase function. This is Protein Syd from Photobacterium profundum (strain SS9).